A 477-amino-acid chain; its full sequence is Stromelysin-1 (477 aa).

The signal sequence occupies residues 1-17; the sequence is MKGLPVLLWLCVVVCSS. A propeptide spans 18–99 (activation peptide); sequence YPLHDSARDD…PRCGVPDVGG (82 aa). Residues 90 to 97 carry the Cysteine switch motif; sequence PRCGVPDV. Cys-92 is a Zn(2+) binding site. Residues Asp-124 and Asp-158 each coordinate Ca(2+). Residues His-168 and Asp-170 each coordinate Zn(2+). Positions 175, 176, 178, and 180 each coordinate Ca(2+). His-183 provides a ligand contact to Zn(2+). The Ca(2+) site is built by Gly-190, Asn-192, and Asp-194. Residue His-196 coordinates Zn(2+). 3 residues coordinate Ca(2+): Asp-198, Asp-199, and Glu-201. Residue His-218 coordinates Zn(2+). Glu-219 is a catalytic residue. Residues His-222 and His-228 each contribute to the Zn(2+) site. Hemopexin repeat units follow at residues 287–336, 337–383, 385–433, and 434–477; these read SPMC…WPSL, PSNM…GLPA, VKKI…FPGV, and DSRV…WFNC. Cys-290 and Cys-477 are disulfide-bonded. Asp-297 is a Ca(2+) binding site. Ca(2+) contacts are provided by Asp-389 and Asp-438.

This sequence belongs to the peptidase M10A family. Ca(2+) is required as a cofactor. Zn(2+) serves as cofactor.

The protein localises to the secreted. Its subcellular location is the extracellular space. The protein resides in the extracellular matrix. It carries out the reaction Preferential cleavage where P1', P2' and P3' are hydrophobic residues.. Functionally, metalloproteinase with a rather broad substrate specificity that can degrade fibronectin, laminin, gelatins of type I, III, IV, and V; collagens III, IV, X, and IX, and cartilage proteoglycans. Activates different molecules including growth factors, plasminogen or other matrix metalloproteinases such as MMP9. Once released into the extracellular matrix (ECM), the inactive pro-enzyme is activated by the plasmin cascade signaling pathway. Also acts intracellularly. For example, in dopaminergic neurons, gets activated by the serine protease HTRA2 upon stress and plays a pivotal role in DA neuronal degeneration by mediating microglial activation and alpha-synuclein/SNCA cleavage. In addition, plays a role in immune response and possesses antiviral activity against various viruses. Mechanistically, translocates from the cytoplasm into the cell nucleus upon virus infection to influence NF-kappa-B activities. In Mus musculus (Mouse), this protein is Stromelysin-1 (Mmp3).